Consider the following 98-residue polypeptide: NADH-ubiquinone oxidoreductase chain 4L (98 aa).

Transmembrane regions (helical) follow at residues 2–22 (TLVMFNITIAFTLSLLGTLMF), 26–46 (LMSTLLCLEGMMLCLFIMAVI), and 61–81 (IIILVFAACEAAVGLALLAMV).

It belongs to the complex I subunit 4L family. Core subunit of respiratory chain NADH dehydrogenase (Complex I) which is composed of 45 different subunits.

The protein localises to the mitochondrion inner membrane. It carries out the reaction a ubiquinone + NADH + 5 H(+)(in) = a ubiquinol + NAD(+) + 4 H(+)(out). Functionally, core subunit of the mitochondrial membrane respiratory chain NADH dehydrogenase (Complex I) which catalyzes electron transfer from NADH through the respiratory chain, using ubiquinone as an electron acceptor. Part of the enzyme membrane arm which is embedded in the lipid bilayer and involved in proton translocation. This chain is NADH-ubiquinone oxidoreductase chain 4L (MT-ND4L), found in Nyctomys sumichrasti (Sumichrast's vesper rat).